The following is a 23-amino-acid chain: Elongation factor Tu (23 aa).

It belongs to the GTP-binding elongation factor family. EF-Tu/EF-1A subfamily. In terms of assembly, monomer. The N-terminus is blocked. Post-translationally, the C-terminus may be subjected to proteolysis.

The protein localises to the cytoplasm. In terms of biological role, this protein promotes the GTP-dependent binding of aminoacyl-tRNA to the A-site of ribosomes during protein biosynthesis. This Delftia acidovorans (Pseudomonas acidovorans) protein is Elongation factor Tu (tuf).